A 409-amino-acid polypeptide reads, in one-letter code: Indian hedgehog protein (409 aa).

The first 23 residues, 1–23 (MQLPKVVLLLCAAALLLSGAVRG), serve as a signal peptide directing secretion. A lipid anchor (N-palmitoyl cysteine) is attached at Cys24. Glu89, Glu90, Asp95, Thr125, Glu126, Asp129, and Asp131 together coordinate Ca(2+). Residues His140, Asp147, and His182 each contribute to the Zn(2+) site. Gly197 is lipidated: Cholesterol glycine ester.

This sequence belongs to the hedgehog family. Multimer. As to quaternary structure, interacts with BOC and CDON. Interacts with PTCH1. Interacts with glypican GPC3. Cholesterylation is required for N-product targeting to lipid rafts and multimerization. In terms of processing, the C-terminal domain displays an autoproteolysis activity and a cholesterol transferase activity. Both activities result in the cleavage of the full-length protein and covalent attachment of a cholesterol moiety to the C-terminal of the newly generated N-product. The N-product is the active species in both local and long-range signaling, whereas the C-product is degraded in the endoplasmic reticulum. Post-translationally, N-palmitoylation by HHAT of N-product is required for indian hedgehog protein N-product multimerization and full activity. As to expression, expressed in the marginal zone at early gastrulation. At stage 14, expression begins in the neural plate with expression becoming more prominent in the anterodorsal area at neural tube closure. At this stage, also expressed diffusely in the somitic and pre-somitic mesoderm. By the early tadpole (stages 28-30), expression is widespread throughout anterior structures with highest levels in the otic vesicle, the eye, and the branchial arches.

It is found in the cell membrane. The protein localises to the endoplasmic reticulum membrane. Its subcellular location is the golgi apparatus membrane. The protein resides in the secreted. It catalyses the reaction glycyl-L-cysteinyl-[protein] + cholesterol + H(+) = [protein]-C-terminal glycyl cholesterol ester + N-terminal L-cysteinyl-[protein]. Functionally, signal involved in the early induction and patterning of anterodorsal ectoderm, nervous system and somites. Induces ectopic cement gland formation in embryos. It is involved in the regulation of endochondral skeleton formation, and the development of retinal pigment epithelium (RPE), photoreceptors and periocular tissues. Its function is as follows. The C-terminal part of the indian hedgehog protein precursor displays an autoproteolysis and a cholesterol transferase activity. Both activities result in the cleavage of the full-length protein into two parts followed by the covalent attachment of a cholesterol moiety to the C-terminal of the newly generated N-product. Both activities occur in the endoplasmic reticulum. The dually lipidated indian hedgehog protein N-product is a morphogen which is essential for a variety of patterning events during development. Binds to the patched (PTCH1) receptor, which functions in association with smoothened (SMO), to activate the transcription of target genes. Signal involved in the early induction and patterning of anterodorsal ectoderm, nervous system and somites. Induces ectopic cement gland formation in embryos. This chain is Indian hedgehog protein, found in Xenopus laevis (African clawed frog).